Consider the following 296-residue polypeptide: Nucleotide-binding protein Rmet_0297 (296 aa).

Residue 8-15 (GISGSGKS) coordinates ATP. 57-60 (DIRS) contacts GTP.

The protein belongs to the RapZ-like family.

Its function is as follows. Displays ATPase and GTPase activities. This is Nucleotide-binding protein Rmet_0297 from Cupriavidus metallidurans (strain ATCC 43123 / DSM 2839 / NBRC 102507 / CH34) (Ralstonia metallidurans).